Reading from the N-terminus, the 953-residue chain is Glutamate receptor 3.5 (953 aa).

Positions 1–29 (MGFFVMIRDVSMGFMLLCISALWVLPIQG) are cleaved as a signal peptide. Over 30-606 (AGRESFSRNS…SPWSFLKPFT (577 aa)) the chain is Extracellular. N-linked (GlcNAc...) asparagine glycosylation is found at Asn38, Asn95, Asn223, Asn371, Asn397, Asn436, Asn454, and Asn569. A helical transmembrane segment spans residues 607–627 (IEMWAVTGALFLFVGAVIWIL). Residues 628 to 636 (EHRFNEEFR) are Cytoplasmic-facing. Residues 637–657 (GPPRRQIITVFWFSFSTMFFS) form a helical membrane-spanning segment. At 658 to 668 (HRENTVSTLGR) the chain is on the cytoplasmic side. The chain crosses the membrane as a helical span at residues 669 to 689 (FVLLVWLFVVLIINSSYTASL). Over 690-850 (TSILTVQQLT…TENYQISVQS (161 aa)) the chain is Extracellular. The chain crosses the membrane as a helical span at residues 851-871 (FWGLFLICGVVWFIALTLFCW). Over 872-953 (KVFWQYQRLR…SQSKDHETPQ (82 aa)) the chain is Cytoplasmic. Residues 928-953 (EKSSKKLKDGQSSAENSQSKDHETPQ) are disordered.

This sequence belongs to the glutamate-gated ion channel (TC 1.A.10.1) family. May form heteromers. As to expression, expressed predominantly in roots. Also detected in shoots.

It localises to the membrane. In terms of biological role, glutamate-gated receptor that probably acts as a non-selective cation channel. May be involved in light-signal transduction and calcium homeostasis via the regulation of calcium influx into cells. This is Glutamate receptor 3.5 (GLR3.5) from Arabidopsis thaliana (Mouse-ear cress).